A 297-amino-acid chain; its full sequence is 4-hydroxy-tetrahydrodipicolinate synthase (297 aa).

Residue Thr-49 participates in pyruvate binding. Tyr-137 acts as the Proton donor/acceptor in catalysis. Catalysis depends on Lys-165, which acts as the Schiff-base intermediate with substrate. Ile-208 contributes to the pyruvate binding site.

It belongs to the DapA family. As to quaternary structure, homotetramer; dimer of dimers.

It localises to the cytoplasm. It catalyses the reaction L-aspartate 4-semialdehyde + pyruvate = (2S,4S)-4-hydroxy-2,3,4,5-tetrahydrodipicolinate + H2O + H(+). It participates in amino-acid biosynthesis; L-lysine biosynthesis via DAP pathway; (S)-tetrahydrodipicolinate from L-aspartate: step 3/4. In terms of biological role, catalyzes the condensation of (S)-aspartate-beta-semialdehyde [(S)-ASA] and pyruvate to 4-hydroxy-tetrahydrodipicolinate (HTPA). This Gluconacetobacter diazotrophicus (strain ATCC 49037 / DSM 5601 / CCUG 37298 / CIP 103539 / LMG 7603 / PAl5) protein is 4-hydroxy-tetrahydrodipicolinate synthase.